Consider the following 343-residue polypeptide: Fructose-1,6-bisphosphatase, cytosolic (343 aa).

Mg(2+) is bound by residues Glu-71, Glu-100, Asp-121, Leu-123, and Asp-124. Substrate contacts are provided by residues 124 to 127, Asn-215, Tyr-247, Tyr-267, and Lys-277; that span reads DGSS. Glu-283 contacts Mg(2+).

This sequence belongs to the FBPase class 1 family. Mg(2+) is required as a cofactor.

Its subcellular location is the cytoplasm. The catalysed reaction is beta-D-fructose 1,6-bisphosphate + H2O = beta-D-fructose 6-phosphate + phosphate. The sequence is that of Fructose-1,6-bisphosphatase, cytosolic (CFBP) from Saccharum hybrid (Sugarcane).